The following is a 342-amino-acid chain: Ferrochelatase (342 aa).

Fe cation contacts are provided by His188 and Glu268.

Belongs to the ferrochelatase family.

The protein resides in the cytoplasm. The catalysed reaction is heme b + 2 H(+) = protoporphyrin IX + Fe(2+). It functions in the pathway porphyrin-containing compound metabolism; protoheme biosynthesis; protoheme from protoporphyrin-IX: step 1/1. Functionally, catalyzes the ferrous insertion into protoporphyrin IX. In Rickettsia typhi (strain ATCC VR-144 / Wilmington), this protein is Ferrochelatase.